The following is a 762-amino-acid chain: Xaa-Pro dipeptidyl-peptidase (762 aa).

Residues Ser-349, Asp-469, and His-499 each act as charge relay system in the active site.

This sequence belongs to the peptidase S15 family. In terms of assembly, homodimer.

It is found in the cytoplasm. The catalysed reaction is Hydrolyzes Xaa-Pro-|- bonds to release unblocked, N-terminal dipeptides from substrates including Ala-Pro-|-p-nitroanilide and (sequentially) Tyr-Pro-|-Phe-Pro-|-Gly-Pro-|-Ile.. Its function is as follows. Removes N-terminal dipeptides sequentially from polypeptides having unsubstituted N-termini provided that the penultimate residue is proline. In Streptococcus sanguinis (strain SK36), this protein is Xaa-Pro dipeptidyl-peptidase.